We begin with the raw amino-acid sequence, 139 residues long: Orientotoxin-2 (139 aa).

Expressed by the venom gland.

The protein resides in the secreted. The catalysed reaction is a 1,2-diacyl-sn-glycero-3-phosphocholine + H2O = a 1-acyl-sn-glycero-3-phosphocholine + a fatty acid + H(+). Has a highly toxic phospholipase A2 activity. The polypeptide is Orientotoxin-2 (Vespa orientalis (Oriental hornet)).